A 1102-amino-acid polypeptide reads, in one-letter code: MAESSSDSDHVRYRDGLSRWATRSFQRGVGSHSTVDVTAKVNTITNTLQDTTRNLRHVDQMLGRYREYSTGQAGAVGQLKEDLEQSINQLRSQRLRRSSGGRSVSVTSLSASDLDGGAVTENLRFAPTSPLKDYDLQGIKRNRFRTGVRFVSETDDMVQLHTFHQSLRDLSSEQVRLGDDLNRELFRRSRSDAETKRVLEELTGKLNEVQKPDVVSDRVERRLQEIEREMRLERELVERRHDQLGLVSLKLQEALKKQEAKADENEDVIKRKLRQSETEKSQLEQELEISRRLLSQSESNRETLLHQVEELRTQLIKAEGDQRGLQHQVPCISKQPLSHQDDQGDDRRFRRGVEREKLSLEKQMADLRVQLNFNSMASELEEVKRCMERKDQEKATLAAQIENLTRDLENREKQQLQMLDQLTEIQNHFETCEANRKRTDLQLSELSQHAEEATKQAEHYLSEFQRSETLREEAEKRREDLKAKAQESIRQWKLKHKKLERSMEKQAETLVQLTEKNNQFIKERDELKSQLCAALQQIENLRKELNDVLSKRALQEEELHCKEKKLNDIESHQAELELEVKNSLDTIHRLENELKRQSKSQSQIKAEKIHLEEEITELKKSQSQDKVKLLEMQESIKDLSAIRADLANKLAEEEKAKKAVFRDLSELTAQVKSKEEETATAITQLKLERDVHQRELEDLSSSLESVKLKHEQNIQELMKHFKKEKSEAESHIRMLKAESLEDKNMAKAHLGQLEKLKSQCEKLTEELTHTENENKKLKLKYQSLKEELDKKEKYISTEEEHLRRMEESRLHLKDQLLCLETEQESILGVIGKEIDEACKTFSRDSLEKLKVLTSGPQLHYDPHRWLAESKTKLQWLCEELKERESRERSMRQQLAACRQELRELTEHKESELLCLFEHIERQEQLLEEFHQEKRGLLEETQRKDEEVETLQDRVNALQMSTRVALDHLESVPEKLSLLEDFKDFRGASSLSEKTDGRYSKYSLHGDSVQQRRDDTKPRIKSFRDDRPLSAGSHAHGLDHSSSCQDHSRFLSSPQFSHSLPVFTKRTIATDPASIEGDTTSLPANGTSPQSKKEEHEIKKYKK.

3 positions are modified to phosphoserine: serine 31, serine 248, and serine 290. 2 coiled-coil regions span residues 215 to 822 and 878 to 959; these read VSDR…LETE and EELK…ALQM. Positions 326 to 346 are disordered; the sequence is QHQVPCISKQPLSHQDDQGDD. Disordered regions lie at residues 991–1048 and 1070–1102; these read SEKT…DHSR and DPASIEGDTTSLPANGTSPQSKKEEHEIKKYKK. Over residues 1009–1027 the composition is skewed to basic and acidic residues; sequence QQRRDDTKPRIKSFRDDRP. Composition is skewed to polar residues over residues 1039 to 1048 and 1076 to 1089; these read HSSSCQDHSR and GDTTSLPANGTSPQ. Over residues 1090–1102 the composition is skewed to basic and acidic residues; the sequence is SKKEEHEIKKYKK.

The protein resides in the cytoplasm. The protein localises to the cytoskeleton. Its subcellular location is the microtubule organizing center. It is found in the centrosome. It localises to the centriole. The protein resides in the spindle pole. The protein is Centrosomal protein of 128 kDa (Cep128) of Mus musculus (Mouse).